The chain runs to 277 residues: Large ribosomal subunit protein uL2 (277 aa).

The disordered stretch occupies residues 222–277 (GVAMNPVDHPHGGGEGRTSGGRHPVTPWGKPTKGKKTRSNKATDKFIMRSRHQRKK).

The protein belongs to the universal ribosomal protein uL2 family. As to quaternary structure, part of the 50S ribosomal subunit. Forms a bridge to the 30S subunit in the 70S ribosome.

One of the primary rRNA binding proteins. Required for association of the 30S and 50S subunits to form the 70S ribosome, for tRNA binding and peptide bond formation. It has been suggested to have peptidyltransferase activity; this is somewhat controversial. Makes several contacts with the 16S rRNA in the 70S ribosome. In Brucella melitensis biotype 1 (strain ATCC 23456 / CCUG 17765 / NCTC 10094 / 16M), this protein is Large ribosomal subunit protein uL2.